The primary structure comprises 168 residues: MSGLLHTTLSGLNSDSYCEISRYRDQHFRGSKKLQEKFLKISSTLYVGNLSFYTTEEQIQELFSKCGDVKRIVMGLDKIKKTPCGFCFVEYYTRADAEHAMRFINGTRLDDRIVRTDWDAGFKEGRQYGRGKTGGQVRDEYRTDYDVGRGGFGKIIQMQKANQQPAVY.

Residues Y23, Y46, 115-119, 126-130, and 136-137 each bind mRNA; these read RTDWD, RQYGR, and QV. The 79-residue stretch at 43-121 folds into the RRM domain; it reads STLYVGNLSF…RIVRTDWDAG (79 aa).

Belongs to the RRM NCBP2 family. As to quaternary structure, component of the nuclear cap-binding complex (CBC), a heterodimer composed of NCBP1/CBP80 and NCBP2/CBP20 that interacts with m7GpppG-capped RNA.

It is found in the nucleus. Its subcellular location is the cytoplasm. Its function is as follows. Component of the cap-binding complex (CBC), which binds co-transcriptionally to the 5' cap of pre-mRNAs and is involved in various processes such as pre-mRNA splicing, translation regulation, nonsense-mediated mRNA decay, RNA-mediated gene silencing (RNAi) by microRNAs (miRNAs) and mRNA export. The CBC complex is involved in mRNA export from the nucleus, leading to the recruitment of the mRNA export machinery to the 5' end of mRNA and to mRNA export in a 5' to 3' direction through the nuclear pore. The CBC complex is also involved in mediating U snRNA and intronless mRNAs export from the nucleus. The CBC complex is essential for a pioneer round of mRNA translation, before steady state translation when the CBC complex is replaced by cytoplasmic cap-binding protein eIF4E. The pioneer round of mRNA translation mediated by the CBC complex plays a central role in nonsense-mediated mRNA decay (NMD), NMD only taking place in mRNAs bound to the CBC complex, but not on eIF4E-bound mRNAs. The CBC complex enhances NMD in mRNAs containing at least one exon-junction complex (EJC), promoting the interaction between UPF1 and UPF2. The CBC complex is also involved in 'failsafe' NMD, which is independent of the EJC complex, while it does not participate in Staufen-mediated mRNA decay (SMD). During cell proliferation, the CBC complex is also involved in microRNAs (miRNAs) biogenesis via its interaction with SRRT/ARS2, thereby being required for miRNA-mediated RNA interference. The CBC complex also acts as a negative regulator of PARN, thereby acting as an inhibitor of mRNA deadenylation. In the CBC complex, NCBP2/CBP20 recognizes and binds capped RNAs (m7GpppG-capped RNA) but requires NCBP1/CBP80 to stabilize the movement of its N-terminal loop and lock the CBC into a high affinity cap-binding state with the cap structure. The conventional cap-binding complex with NCBP2 binds both small nuclear RNA (snRNA) and messenger (mRNA) and is involved in their export from the nucleus. The protein is Nuclear cap-binding protein subunit 2 (NCBP2) of Gallus gallus (Chicken).